Reading from the N-terminus, the 302-residue chain is Cell division protein FtsQ (302 aa).

The segment at 1–41 (MPAVVRGGPPKPRRPRAEAPASPSKGKPAPRKAQPAAKLHA) is disordered. Residues 1-50 (MPAVVRGGPPKPRRPRAEAPASPSKGKPAPRKAQPAAKLHAARGVGLSPT) lie on the Cytoplasmic side of the membrane. Positions 18–38 (EAPASPSKGKPAPRKAQPAAK) are enriched in low complexity. The helical transmembrane segment at 51–71 (VALSVAGAALGLGLVVMLATG) threads the bilayer. Over 72–302 (HRAERLGASM…LPGQPAADGA (231 aa)) the chain is Periplasmic. Residues 94 to 162 (FRLKTVHIRG…DTVLIAVEER (69 aa)) enclose the POTRA domain.

This sequence belongs to the FtsQ/DivIB family. FtsQ subfamily.

Its subcellular location is the cell inner membrane. In terms of biological role, essential cell division protein. The polypeptide is Cell division protein FtsQ (Caulobacter vibrioides (strain ATCC 19089 / CIP 103742 / CB 15) (Caulobacter crescentus)).